The primary structure comprises 562 residues: Apyrase (562 aa).

Positions 1–24 (MAGRPGYSEVIFLYVVSVAVIARA) are cleaved as a signal peptide. The a divalent metal cation site is built by D47, H49, and D98. A glycan (N-linked (GlcNAc...) asparagine) is linked at N112. Residues N130, H233, and H257 each coordinate a divalent metal cation. Position 370 (R370) interacts with AMP. A glycan (N-linked (GlcNAc...) asparagine) is linked at N390. Residues R405, F424, and D514 each contribute to the AMP site.

It belongs to the 5'-nucleotidase family. In terms of assembly, (Microbial infection) Interacts with Zika virus envelope protein E and Zika virus-like particles; the interaction does not affect Zika virus replication in human endothelial cells and keratinocytes. The cofactor is a divalent metal cation. In terms of processing, the N-terminus is blocked. Female saliva (at protein level). Female salivary gland (at protein level). Not detected or low-level expression in female carcasses without salivary glands. Not detected in male tissues.

The protein localises to the secreted. It carries out the reaction a ribonucleoside 5'-triphosphate + 2 H2O = a ribonucleoside 5'-phosphate + 2 phosphate + 2 H(+). Functionally, facilitates hematophagy by preventing ADP-, collagen- and thrombin-dependent platelet aggregation in the host. Cleaves adenosine triphosphate (ATP) and adenosine diphosphate (ADP) to adenosine monophosphate (AMP) and inorganic phosphate. May reduce probing time by facilitating the speed of locating blood. In terms of biological role, (Microbial infection) Does not affect Zika virus replication in human endothelial cells and keratinocytes. In Aedes aegypti (Yellowfever mosquito), this protein is Apyrase.